Here is a 166-residue protein sequence, read N- to C-terminus: Ribosome maturation factor RimM (166 aa).

Residues 94–166 enclose the PRC barrel domain; that stretch reads EGEYYLGKLI…IELKVLDLLK (73 aa).

Belongs to the RimM family. As to quaternary structure, binds ribosomal protein uS19.

It is found in the cytoplasm. Its function is as follows. An accessory protein needed during the final step in the assembly of 30S ribosomal subunit, possibly for assembly of the head region. Essential for efficient processing of 16S rRNA. May be needed both before and after RbfA during the maturation of 16S rRNA. It has affinity for free ribosomal 30S subunits but not for 70S ribosomes. This chain is Ribosome maturation factor RimM, found in Borreliella burgdorferi (strain ATCC 35210 / DSM 4680 / CIP 102532 / B31) (Borrelia burgdorferi).